Here is an 804-residue protein sequence, read N- to C-terminus: MYNHKVVEKKWQDYWAKHDTFKTGTDPKKKNYYALDMFPFPSGKGLHVGHPEGYTATDIVSRMKRAQGYNVLHPMGWDAFGLPTEQYALKTGEDPAVVTKNNIANFKRQLNKLGFSYDWDREITTSDPNYYKWTQWVFEQMYKKGLAYEAEVPVNWSPDLGTVVANEEVIDGKTERGGYPVYRRNMRQWMLKMTAYADRLLEDLDDLDWPEPVKEMQRNWIGRSVGAQVTFKIKDSDKTFDIFTTRPDTLFGCSYTVLAPENKLVQEITTDGHRDEVNAYIKKIESKSDLERTDLNKDKTGVFTGAYAINPVNGKEVPIWISDYVLASYGTGAVMAVPAHDDRDYAFAKKFDLPINQVLEGGDLSKAAFTEDGPHINSEFLNGLNIKDAKKKMVDWLEEHNCGEKKVNYKLRDWDFSRQRYWGEPIPVIHWEDGTTSLVPEDQLPLRLPHATDIKPSGTPESPLANLTDWVNVVDEMGRKGKRETNTMPNWAGSSWYYLRYVDPHNDKELADYDLLKQWLPVDLYIGGAEHAVRHLLYARFWHKVLYDLGVVPTKEPFQRLYNQGLILKNHEKMSKSKGNVVNPDEVIDEYGADSLRMYEMFMGPLDASIDWDDNGPASTKKFLDRVWRLFVNDLDLKAIPQERIVDKNDGELDKVYAETVKKVTEDFDALHFNTAISQMMVFINAAQKAKTIPREYVEGFVKLLAPVAPHMMEEIWQVFGHDESITYAKWPTYDPAKLVESTVEIMVQVNGKLRGKFEAAKDADRDDVQKQAMALPHVQKFLEGKDVKKVIVVPNKIVNIVAK.

The short motif at 39 to 50 (PFPSGKGLHVGH) is the 'HIGH' region element. A 'KMSKS' region motif is present at residues 573 to 577 (KMSKS). Lysine 576 contacts ATP.

It belongs to the class-I aminoacyl-tRNA synthetase family.

It localises to the cytoplasm. It carries out the reaction tRNA(Leu) + L-leucine + ATP = L-leucyl-tRNA(Leu) + AMP + diphosphate. The protein is Leucine--tRNA ligase of Lactobacillus helveticus (strain DPC 4571).